Consider the following 448-residue polypeptide: Antizyme inhibitor 1 (448 aa).

The protein belongs to the Orn/Lys/Arg decarboxylase class-II family. ODC antizyme inhibitor subfamily. As to quaternary structure, monomer. Interacts with OAZ1 and OAZ3; this interaction disrupts the interaction between the antizyme and ODC1. Post-translationally, ubiquitinated, leading to its proteasomal degradation; a process that is reduced in presence of antizyme OAZ1. As to expression, expressed in various tissues including liver, heart and kidney.

The protein localises to the nucleus. Its function is as follows. Antizyme inhibitor (AZI) protein that positively regulates ornithine decarboxylase (ODC) activity and polyamine uptake. AZI is an enzymatically inactive ODC homolog that counteracts the negative effect of ODC antizymes (AZs) OAZ1, OAZ2 and OAZ3 on ODC activity by competing with ODC for antizyme-binding. Inhibits antizyme-dependent ODC degradation and releases ODC monomers from their inactive complex with antizymes, leading to formation of the catalytically active ODC homodimer and restoring polyamine production. The protein is Antizyme inhibitor 1 (Azin1) of Rattus norvegicus (Rat).